A 335-amino-acid polypeptide reads, in one-letter code: LIM and SH3 domain protein F42H10.3 (335 aa).

The LIM zinc-binding domain maps to 5–65 (CAREDCGKTV…DPHYPKTVAS (61 aa)). Nebulin repeat units follow at residues 66 to 97 (VMAD…KMKG) and 98 to 132 (TKIE…QKAR). The segment covering 128–142 (DQKARQEEVRPKEEI) has biased composition (basic and acidic residues). 2 disordered regions span residues 128–151 (DQKA…PTPI) and 233–264 (DFAG…ISPT). Residues 242-260 (SNSISSTSPHSTLSSPQST) show a composition bias toward low complexity. In terms of domain architecture, SH3 spans 266-327 (KAGFAVKAIY…PANYVQPHKL (62 aa)).

The protein is LIM and SH3 domain protein F42H10.3 of Caenorhabditis elegans.